Consider the following 159-residue polypeptide: U1 small nuclear ribonucleoprotein C (159 aa).

The Matrin-type zinc finger occupies 4 to 36 (FYCDYCDTYLTHDSPSVRKTHCSGRKHKENVKD). Disordered regions lie at residues 63–95 (PPTP…MPAP) and 139–159 (MRPP…RPDR). The segment covering 77 to 95 (IPPPPSLGGPPRPGMMPAP) has biased composition (pro residues).

The protein belongs to the U1 small nuclear ribonucleoprotein C family. Component of the U1 snRNP. The U1 snRNP is composed of the U1 snRNA and the 7 core Sm proteins snrpb, snrpd1, snrpd2, snrpd3, snrpe, snrpf and snrpg that assemble in a heptameric protein ring on the Sm site of the small nuclear RNA to form the core snRNP, and at least 3 U1 snRNP-specific proteins snrnp70/U1-70K, snrpa/U1-A and snrpc/U1-C. snrpc/U1-C interacts with U1 snRNA and the 5' splice-site region of the pre-mRNA.

It localises to the nucleus. Functionally, component of the spliceosomal U1 snRNP, which is essential for recognition of the pre-mRNA 5' splice-site and the subsequent assembly of the spliceosome. SNRPC/U1-C is directly involved in initial 5' splice-site recognition for both constitutive and regulated alternative splicing. The interaction with the 5' splice-site seems to precede base-pairing between the pre-mRNA and the U1 snRNA. Stimulates commitment or early (E) complex formation by stabilizing the base pairing of the 5' end of the U1 snRNA and the 5' splice-site region. The sequence is that of U1 small nuclear ribonucleoprotein C from Xenopus laevis (African clawed frog).